An 80-amino-acid polypeptide reads, in one-letter code: uncharacterized protein (80 aa).

The protein belongs to the 2-oxoacid dehydrogenase family.

This is an uncharacterized protein from Mycobacterium tuberculosis (strain CDC 1551 / Oshkosh).